The following is a 581-amino-acid chain: ATP-dependent lipid A-core flippase (581 aa).

Transmembrane regions (helical) follow at residues 15 to 35 (LWPIVSPFRIGLIVAAVALIL), 68 to 88 (LIVIALMIMRGLSGFVSSYCI), 152 to 172 (IIGLFVLMFYYSWQLSLILIV), 252 to 272 (PIIQLIASFALAFVLYAASFP), and 274 to 294 (IMETLTAGKITVVFSSMIALM). Residues 27 to 309 (IVAAVALILN…LTNVNAQFQR (283 aa)) form the ABC transmembrane type-1 domain. The ABC transporter domain occupies 341–577 (IEFRNVTFCY…NGVYSQLHRM (237 aa)). 375 to 382 (GRSGSGKS) is a binding site for ATP.

This sequence belongs to the ABC transporter superfamily. Lipid exporter (TC 3.A.1.106) family. In terms of assembly, homodimer.

It localises to the cell inner membrane. It carries out the reaction ATP + H2O + lipid A-core oligosaccharideSide 1 = ADP + phosphate + lipid A-core oligosaccharideSide 2.. Its function is as follows. Involved in lipopolysaccharide (LPS) biosynthesis. Translocates lipid A-core from the inner to the outer leaflet of the inner membrane. Transmembrane domains (TMD) form a pore in the inner membrane and the ATP-binding domain (NBD) is responsible for energy generation. This is ATP-dependent lipid A-core flippase from Photorhabdus laumondii subsp. laumondii (strain DSM 15139 / CIP 105565 / TT01) (Photorhabdus luminescens subsp. laumondii).